We begin with the raw amino-acid sequence, 375 residues long: Period circadian protein (375 aa).

Disordered regions lie at residues 27-119 (VTAP…VPPV), 140-189 (KHRE…WEGE), and 219-255 (KCQASGAGGGGSGSVGGTGNIGSGGSNAQPSTNQYTQ). Positions 69–91 (SGNFTTGSNLHMSSVTNTSNAGT) are enriched in low complexity. Over residues 92–113 (GTSGTGNSGGGGGGGGGAGPGN) the composition is skewed to gly residues. The span at 145 to 156 (RGRSGEKNKKSA) shows a compositional bias: basic and acidic residues. Gly residues predominate over residues 224-243 (GAGGGGSGSVGGTGNIGSGG). Residues 245 to 255 (NAQPSTNQYTQ) show a composition bias toward polar residues.

In terms of assembly, forms a heterodimer with timeless (TIM); the complex then translocates into the nucleus. Phosphorylated with a circadian rhythmicity, probably by the double-time protein (dbt). Phosphorylation could be implicated in the stability of per monomer and in the formation of heterodimer per-tim.

The protein localises to the nucleus. It localises to the cytoplasm. The protein resides in the perinuclear region. Its function is as follows. Essential for biological clock functions. Determines the period length of circadian and ultradian rhythms; an increase in PER dosage leads to shortened circadian rhythms and a decrease leads to lengthened circadian rhythms. Essential for the circadian rhythmicity of locomotor activity, eclosion behavior, and for the rhythmic component of the male courtship song that originates in the thoracic nervous system. The biological cycle depends on the rhythmic formation and nuclear localization of the TIM-PER complex. Light induces the degradation of TIM, which promotes elimination of PER. Nuclear activity of the heterodimer coordinatively regulates PER and TIM transcription through a negative feedback loop. Behaves as a negative element in circadian transcriptional loop. Does not appear to bind DNA, suggesting indirect transcriptional inhibition. In Drosophila sucinea (Fruit fly), this protein is Period circadian protein (per).